A 441-amino-acid polypeptide reads, in one-letter code: Myocyte-specific enhancer factor 2C (441 aa).

The region spanning 1-61 (MGRKKIQITR…NKLFQYASTD (61 aa)) is the MADS-box domain. Lysine 4 is modified (N6-acetyllysine). Positions 58–86 (ASTDMDKVLLKYTEYNEPHESRTNSDIVE) form a DNA-binding region, mef2-type. Serine 59 bears the Phosphoserine; by CK2 mark. Residues 91-116 (KGLNGCDSPDPDADDSVGHSPESEDK) are disordered. Residues serine 98, serine 106, and serine 110 each carry the phosphoserine modification. N6-acetyllysine is present on residues lysine 116 and lysine 119. Residues 180–224 (NSMSPGVTHRPPSAGNTGGLMGGDLTSGAGTSAGNGYGNPRNSPG) are disordered. Residues serine 222 and serine 228 each carry the phosphoserine modification. N6-acetyllysine is present on residues lysine 234 and lysine 239. Phosphoserine is present on serine 240. Lysine 252 and lysine 264 each carry N6-acetyllysine. Residues 271–278 (SEDVDLLL) are beta domain. 2 positions are modified to phosphothreonine; by MAPK7 and MAPK14: threonine 293 and threonine 300. Residues 353 to 441 (QHLHSMPPSA…RMRLSEGWAT (89 aa)) are disordered. Positions 362 to 377 (ALSQLGDRTTTPSRYP) are enriched in polar residues. Position 387 is a phosphoserine; by MAPK7 (serine 387). Positions 387–400 (SPVDSLSSCSSSYD) are enriched in low complexity. Over residues 401–411 (GSDREDHRNEF) the composition is skewed to basic and acidic residues. Serine 413 carries the phosphoserine modification.

The protein belongs to the MEF2 family. In terms of assembly, forms a complex with class II HDACs in undifferentiating cells. On myogenic differentiation, HDACs are released into the cytoplasm allowing MEF2s to interact with other proteins for activation. Interacts with EP300 in differentiating cells; the interaction acetylates MEF2C leading to increased DNA binding and activation. Interacts with HDAC7 and CARM1. Interacts with HDAC4, HDAC7 and HDAC9; the interaction with HDACs represses transcriptional activity. Interacts with LPIN1. Interacts with MYOCD. Interacts with AKAP13. Interacts with FOXK1; the interaction inhibits MEF2C transactivation activity. Interacts (via N-terminus) with HABP4; this interaction decreases DNA-binding activity of MEF2C in myocardial cells in response to mechanical stress. Interacts with JPH2; interaction specifically takes place with the Junctophilin-2 N-terminal fragment cleavage product of JPH2. Interacts (via MADS box) with SOX18. Interacts with PHF7; the interaction promotes MEF2C binding to its transcription targets. Post-translationally, phosphorylation on Ser-59 enhances DNA binding activity. Acetylated by p300 on several sites in diffentiating myocytes. Acetylation on Lys-4 increases DNA binding and transactivation. In terms of processing, proteolytically cleaved in cerebellar granule neurons, probably by caspase 7, following neurotoxicity.

Its subcellular location is the nucleus. It is found in the cytoplasm. The protein localises to the sarcoplasm. In terms of biological role, transcription activator which binds specifically to the MEF2 element present in the regulatory regions of many muscle-specific genes. Controls cardiac morphogenesis and myogenesis, and is also involved in vascular development. Enhances transcriptional activation mediated by SOX18. Plays an essential role in hippocampal-dependent learning and memory by suppressing the number of excitatory synapses and thus regulating basal and evoked synaptic transmission. Crucial for normal neuronal development, distribution, and electrical activity in the neocortex. Necessary for proper development of megakaryocytes and platelets and for bone marrow B-lymphopoiesis. Required for B-cell survival and proliferation in response to BCR stimulation, efficient IgG1 antibody responses to T-cell-dependent antigens and for normal induction of germinal center B-cells. May also be involved in neurogenesis and in the development of cortical architecture. The sequence is that of Myocyte-specific enhancer factor 2C from Bos taurus (Bovine).